The following is a 526-amino-acid chain: WRKY transcription factor 72A (526 aa).

2 stretches are compositionally biased toward basic and acidic residues: residues 40–52 (KERK…DDNS) and 60–76 (LTGD…KADM). 2 disordered regions span residues 40–76 (KERK…KADM) and 170–200 (SSTK…QTWP). A coiled-coil region spans residues 62-106 (GDKKDDQLESAKADMEEVMEENQRLKKHLDKIMKDYRNLQMQFHE). Residues 170–185 (SSTKSSPSNLSPENSL) show a composition bias toward low complexity. The segment at residues 232 to 298 (CDTPTMNDGC…YEGTHNHPLP (67 aa)) is a DNA-binding region (WRKY).

Belongs to the WRKY group II-b family. As to expression, expressed in roots, trichomes and fruits.

It is found in the nucleus. In terms of biological role, transcription activator involved in the transcriptional regulation of terpene biosynthesis in glandular trichomes. Binds to the promoter of the linalool synthase TPS5 and promotes TPS5 gene transactivation. In association with WRKY72B, contributes to basal defense against root-knot nematodes (RKNs) and potato aphids, as well as Mi-1-mediated gene-for-gene resistance to these pests. Both WRKY72A and WRKY72B are not required for gene-for-gene resistance mediated by Pto, another tomato R gene. The protein is WRKY transcription factor 72A of Solanum lycopersicum (Tomato).